Here is an 844-residue protein sequence, read N- to C-terminus: Proto-oncogene vav (844 aa).

The Calponin-homology (CH) domain occupies 1 to 119 (MELWRQCTHW…YTLSALSWTP (119 aa)). Residues 193-372 (KRCCCLREIQ…RDLAQCVNEV (180 aa)) enclose the DH domain. The 103-residue stretch at 401–503 (RPKIDGELKI…WMEQFEMAIS (103 aa)) folds into the PH domain. The Phorbol-ester/DAG-type zinc-finger motif lies at 514–563 (GHDFQMFSFEETTSCKACQMLLRGTFYQGYRCQRCRAPAHKECLGRVPPC). Residues 567 to 589 (GQDYSGTMKKDKPHRRAQDKKRN) are disordered. The region spanning 591–659 (LGLPKMEVCQ…PCNRVKPYVH (69 aa)) is the SH3 1 domain. The 95-residue stretch at 670-764 (WYAGPMERAG…SLDTTLQFPF (95 aa)) folds into the SH2 domain. The SH3 2 domain maps to 781–841 (KIFGTAKARY…PSNYVEEDYS (61 aa)). Phosphotyrosine occurs at positions 825 and 843.

In terms of assembly, interacts with SHB. Interacts with APS, DOCK2, GRB2, GRB3, DOCK2, SLA, TEC and ZNF655/VIK. Interacts with SIAH2; without leading to its degradation. Associates with BLNK, PLCG1, GRB2 and NCK1 in a B-cell antigen receptor-dependent fashion. Interacts with CBLB; which inhibits tyrosine phosphorylation and down-regulates activity. May interact with CCPG1. Interacts with CLNK. Interacts with THEMIS2. Interacts with NEK3 and this interaction is prolactin-dependent. Interacts with ITK. Interacts with PTK2B/PYK2. Interacts with HCK. Interacts with PTK2B/PYK2. Interacts (via SH2 domain) with SYK. Interacts with ANKRD54. Interacts with CD6. Interacts with LCP2; this interaction plays a role in TCR-mediated cytokine production. Post-translationally, phosphorylated by FYN. Phosphorylated on tyrosine residues by HCK in response to IFNG and bacterial lipopolysaccharide (LPS).

Functionally, couples tyrosine kinase signals with the activation of the Rho/Rac GTPases, thus leading to cell differentiation and/or proliferation. The sequence is that of Proto-oncogene vav (VAV1) from Bos taurus (Bovine).